The following is a 66-amino-acid chain: 14-3-3-like protein 2 (66 aa).

It belongs to the 14-3-3 family.

The polypeptide is 14-3-3-like protein 2 (Pseudotsuga menziesii (Douglas-fir)).